Consider the following 261-residue polypeptide: 2,3-dihydro-2,3-dihydroxybenzoate dehydrogenase (261 aa).

12–36 contacts NAD(+); the sequence is FITGAAQGIGEAVARTLASQGAHIA. S144 contacts substrate. Y157 serves as the catalytic Proton acceptor.

This sequence belongs to the short-chain dehydrogenases/reductases (SDR) family.

The protein resides in the cytoplasm. The enzyme catalyses (2S,3S)-2,3-dihydroxy-2,3-dihydrobenzoate + NAD(+) = 2,3-dihydroxybenzoate + NADH + H(+). It participates in siderophore biosynthesis; bacillibactin biosynthesis. The sequence is that of 2,3-dihydro-2,3-dihydroxybenzoate dehydrogenase (dhbA) from Bacillus subtilis (strain 168).